The following is a 241-amino-acid chain: 2,3,4,5-tetrahydropyridine-2,6-dicarboxylate N-acetyltransferase (241 aa).

This sequence belongs to the transferase hexapeptide repeat family. DapH subfamily.

The catalysed reaction is (S)-2,3,4,5-tetrahydrodipicolinate + acetyl-CoA + H2O = L-2-acetamido-6-oxoheptanedioate + CoA. The protein operates within amino-acid biosynthesis; L-lysine biosynthesis via DAP pathway; LL-2,6-diaminopimelate from (S)-tetrahydrodipicolinate (acetylase route): step 1/3. Its function is as follows. Catalyzes the transfer of an acetyl group from acetyl-CoA to tetrahydrodipicolinate. This chain is 2,3,4,5-tetrahydropyridine-2,6-dicarboxylate N-acetyltransferase, found in Caldanaerobacter subterraneus subsp. tengcongensis (strain DSM 15242 / JCM 11007 / NBRC 100824 / MB4) (Thermoanaerobacter tengcongensis).